A 335-amino-acid chain; its full sequence is Biotin synthase (335 aa).

Residues 1-20 (MVSVGTQSHSGRDQAEQNPS) are disordered. Residues 59–284 (GHLQKSSLLS…MMPQSMVRLS (226 aa)) form the Radical SAM core domain. [4Fe-4S] cluster contacts are provided by cysteine 74, cysteine 78, and cysteine 81. Residues cysteine 118, cysteine 150, cysteine 210, and arginine 282 each coordinate [2Fe-2S] cluster.

Belongs to the radical SAM superfamily. Biotin synthase family. Homodimer. The cofactor is [4Fe-4S] cluster. [2Fe-2S] cluster is required as a cofactor.

It catalyses the reaction (4R,5S)-dethiobiotin + (sulfur carrier)-SH + 2 reduced [2Fe-2S]-[ferredoxin] + 2 S-adenosyl-L-methionine = (sulfur carrier)-H + biotin + 2 5'-deoxyadenosine + 2 L-methionine + 2 oxidized [2Fe-2S]-[ferredoxin]. It functions in the pathway cofactor biosynthesis; biotin biosynthesis; biotin from 7,8-diaminononanoate: step 2/2. Its function is as follows. Catalyzes the conversion of dethiobiotin (DTB) to biotin by the insertion of a sulfur atom into dethiobiotin via a radical-based mechanism. This chain is Biotin synthase, found in Zymomonas mobilis subsp. mobilis (strain ATCC 31821 / ZM4 / CP4).